We begin with the raw amino-acid sequence, 1803 residues long: 6-methylsalicylic acid synthase (1803 aa).

Residues 1–40 (MEVHGDEVLSVDSGVSTPPSTGSGFRRPLETPGTEIGNLN) are disordered. The span at 13 to 24 (SGVSTPPSTGSG) shows a compositional bias: low complexity. The Ketosynthase family 3 (KS3) domain maps to 44-470 (QNEVAVVGMA…GTVSHAIIEE (427 aa)). Active-site for beta-ketoacyl synthase activity residues include C216, H351, and H391. The region spanning 581–894 (VWVFSGHGAQ…SIAQLHCRGA (314 aa)) is the Malonyl-CoA:ACP transacylase (MAT) domain. S667 (for malonyltransferase activity) is an active-site residue. The tract at residues 940-1058 (HTLLGQRVPV…GQWEAGGSKN (119 aa)) is N-terminal hotdog fold. Positions 940 to 1218 (HTLLGQRVPV…FSEIEGTPGS (279 aa)) constitute a PKS/mFAS DH domain. The Proton acceptor; for thioesterase activity role is filled by H972. The segment at 1073–1218 (ANNKLADNFS…FSEIEGTPGS (146 aa)) is C-terminal hotdog fold. Catalysis depends on D1129, which acts as the Proton donor; for thioesterase activity. The required for homotetramer formation stretch occupies residues 1141-1262 (TSVGSTLFFD…KNVADLYCGS (122 aa)). The Ketoreductase (KR) domain maps to 1434–1628 (STYLITGGLG…AVAVQWTSWR (195 aa)). A compositionally biased stretch (low complexity) spans 1701-1710 (ASSADAPSAA). The disordered stretch occupies residues 1701-1721 (ASSADAPSAAPKETNEMPESI). In terms of domain architecture, Carrier spans 1726-1801 (TWLDERIRDC…HLVGWFLEKM (76 aa)). Residue S1761 is modified to O-(pantetheine 4'-phosphoryl)serine. The interval 1783–1803 (LTWSCPTVSHLVGWFLEKMGN) is required for catalytic activity.

As to quaternary structure, homotetramer.

The catalysed reaction is 3 malonyl-CoA + acetyl-CoA + NADPH + 3 H(+) = 6-methylsalicylate + 3 CO2 + NADP(+) + 4 CoA + H2O. The protein operates within secondary metabolite biosynthesis. In terms of biological role, 6-methylsalicylic acid synthase; part of the gene cluster that mediates the biosynthesis of terreic acid, a quinone epoxide inhibitor of Bruton's tyrosine kinase. The first step of the pathway is the synthesis of 6-methylsalicylic acid (6-MSA) by the 6-methylsalicylic acid synthase atX. In the biosynthesis of 6-MSA, atX utilizes one acetyl-CoA and three malonyl-CoAs as its substrates and catalyzes a series of programmed reactions including Claisen condensation, reduction, aldol cyclization, and the hydrolytic cleavage that yields 6-MSA. The 6-methylsalicylate 1-monooxygenase atA then catalyzes the decarboxylative hydroxylation of 6-MSA to 3-methylcatechol. The next step is the conversion of 3-methylcatechol to 3-methyl-1,2,4-benzenetriol by cytochrome P450 monooxygenase atE, which is enhanced by cytochrome P450 monooxygenase atG. Then, the epoxidase atD catalyzes the epoxidation and hydroxyl oxidation of 3-methyl-1,2,4-benzenetriol to terremutin. Lastly, GMC oxidoreductase atC oxidizes terremutin to terreic acid. This chain is 6-methylsalicylic acid synthase, found in Aspergillus terreus (strain NIH 2624 / FGSC A1156).